Here is a 530-residue protein sequence, read N- to C-terminus: Developmental and secondary metabolism regulator VEL1 (530 aa).

The 195-residue stretch at 26–220 (NRSLWYQMTV…ADQGCQVRIR (195 aa)) folds into the Velvet domain. The Nuclear localization signal signature appears at 40–45 (ERARAC). The interval 206–516 (LSKTVADQGC…HDQGWYSRAD (311 aa)) is disordered. Residues 244-253 (FERREEDFGR) are compositionally biased toward basic and acidic residues. Pro residues predominate over residues 295 to 305 (YPPPPPPPSYE). The segment covering 347–356 (YAPTAQSPYS) has biased composition (polar residues). Residues 380–389 (VKHDLYDRRQ) are compositionally biased toward basic and acidic residues. A compositionally biased stretch (low complexity) spans 390–404 (STSSYVPPSPSVYST). Residues 415–426 (SYPPTPVAAPRP) show a composition bias toward pro residues. The tract at residues 429-460 (MHSQTSLPALKIDQLVSPVSPLPPIEPQTGPA) is PEST. The segment covering 478 to 490 (FAQSTRPLHNGQR) has biased composition (polar residues).

Belongs to the velvet family. VeA subfamily. As to quaternary structure, component of the heterotrimeric velvet complex composed of LAE1, VEL1 and VEL2; VEL1 acting as a bridging protein between LAE1 and VEL2. Interacts with LAE1.

It localises to the nucleus. The protein resides in the cytoplasm. Its function is as follows. Component of the velvet transcription factor complex that controls sexual/asexual developmental ratio in response to light, promoting sexual development in the darkness while stimulating asexual sporulation under illumination. The velvet complex hat acts as a global regulator for secondary metabolite gene expression. Controls positively the expression of the gibberellins, fumonisins and fusarin C gene clusters. Controls the expression of the fusaric acid gene cluster. Controls negatively the expression of the bikaverin gene cluster. Regulates the expression of laeA. Plays a crucial role in virulence. This Gibberella fujikuroi (strain CBS 195.34 / IMI 58289 / NRRL A-6831) (Bakanae and foot rot disease fungus) protein is Developmental and secondary metabolism regulator VEL1.